Reading from the N-terminus, the 625-residue chain is Probable potassium transport system protein Kup 2 (625 aa).

The next 12 membrane-spanning stretches (helical) occupy residues 15-35 (LSFA…LYAF), 52-72 (ILSL…LVIV), 98-118 (GGWL…DGML), 134-154 (LSPN…FFLF), 164-184 (IGVY…ILGF), 212-232 (LALF…ALFA), 246-266 (WFAV…ALVL), 284-304 (FLPV…QAII), 336-356 (VYLP…VVIF), 365-385 (AYGI…GIIA), 394-414 (FKIL…AGNI), and 417-437 (LLTG…VMYT).

It belongs to the HAK/KUP transporter (TC 2.A.72) family.

It is found in the cell inner membrane. It carries out the reaction K(+)(in) + H(+)(in) = K(+)(out) + H(+)(out). Its function is as follows. Transport of potassium into the cell. Likely operates as a K(+):H(+) symporter. The sequence is that of Probable potassium transport system protein Kup 2 from Legionella pneumophila (strain Corby).